Reading from the N-terminus, the 95-residue chain is Small ribosomal subunit protein bS20c (95 aa).

Belongs to the bacterial ribosomal protein bS20 family.

It localises to the plastid. The protein localises to the chloroplast. Binds directly to 16S ribosomal RNA. This is Small ribosomal subunit protein bS20c from Pyropia yezoensis (Susabi-nori).